An 87-amino-acid polypeptide reads, in one-letter code: Small ribosomal subunit protein bS20 (87 aa).

The interval methionine 1 to methionine 27 is disordered.

This sequence belongs to the bacterial ribosomal protein bS20 family.

Binds directly to 16S ribosomal RNA. The sequence is that of Small ribosomal subunit protein bS20 from Erwinia tasmaniensis (strain DSM 17950 / CFBP 7177 / CIP 109463 / NCPPB 4357 / Et1/99).